Here is a 333-residue protein sequence, read N- to C-terminus: Phenylalanine--tRNA ligase alpha subunit (333 aa).

Mg(2+) is bound at residue glutamate 254.

This sequence belongs to the class-II aminoacyl-tRNA synthetase family. Phe-tRNA synthetase alpha subunit type 1 subfamily. In terms of assembly, tetramer of two alpha and two beta subunits. Requires Mg(2+) as cofactor.

Its subcellular location is the cytoplasm. The catalysed reaction is tRNA(Phe) + L-phenylalanine + ATP = L-phenylalanyl-tRNA(Phe) + AMP + diphosphate + H(+). This is Phenylalanine--tRNA ligase alpha subunit from Xylella fastidiosa (strain M12).